We begin with the raw amino-acid sequence, 443 residues long: Tol-Pal system protein TolB (443 aa).

Positions 1-31 are cleaved as a signal peptide; the sequence is MMIMTTRTFFSWFIVICAFWLTSFSSVPVHA. The tract at residues 422–443 is disordered; the sequence is ERQLPTPNDASDPAWSPLLNIQ.

This sequence belongs to the TolB family. In terms of assembly, the Tol-Pal system is composed of five core proteins: the inner membrane proteins TolA, TolQ and TolR, the periplasmic protein TolB and the outer membrane protein Pal. They form a network linking the inner and outer membranes and the peptidoglycan layer.

It is found in the periplasm. In terms of biological role, part of the Tol-Pal system, which plays a role in outer membrane invagination during cell division and is important for maintaining outer membrane integrity. This chain is Tol-Pal system protein TolB, found in Bartonella henselae (strain ATCC 49882 / DSM 28221 / CCUG 30454 / Houston 1) (Rochalimaea henselae).